A 108-amino-acid chain; its full sequence is Protein FATTY ACID EXPORT 7 (108 aa).

The next 3 helical transmembrane spans lie at isoleucine 32–proline 52, proline 55–serine 75, and proline 85–isoleucine 105.

The protein belongs to the TMEM14 family.

It localises to the membrane. In terms of biological role, may be involved in free fatty acids export. This chain is Protein FATTY ACID EXPORT 7, found in Arabidopsis thaliana (Mouse-ear cress).